Reading from the N-terminus, the 369-residue chain is MWPLWLVASLLALSQALPFEQKGFWDFTLDDGLPMLNDEEASGAETTSGVPDLDALTPTYSAMCPFGCHCHLRVVQCSDLGLKAVPKEISPDTMLLDLQNNDISELRADDFKGLHHLYALVLVNNKISKIHEKAFSPLRKLQKLYISKNHLVEIPPNLPSSLVELRIHDNRIRKVPKGVFSGLRNMNCIEMGGNPLENSGFEPGAFDGLKLNYLRISEAKLTGIPKDLPETLNELHLDHNKIQAIELEDLLRYSKLYRLGLGHNQIRMIENGSLSFLPTLRELHLDNNKLSRVPSGLPDLKLLQVVYLHTNNITKVGVNDFCPVGFGVKRAYYNGISLFNNPVPYWEVQPATFRCVTDRLAIQFGNYKK.

A signal peptide spans 1 to 16; that stretch reads MWPLWLVASLLALSQA. A propeptide spanning residues 17 to 37 is cleaved from the precursor; that stretch reads LPFEQKGFWDFTLDDGLPMLN. Residues serine 42 and serine 48 are each glycosylated (O-linked (Xyl...) (glycosaminoglycan) serine). 2 cysteine pairs are disulfide-bonded: cysteine 64–cysteine 70 and cysteine 68–cysteine 77. LRR repeat units lie at residues 83–103, 104–127, 128–151, 152–172, 173–196, 197–221, 222–242, 243–266, 267–290, 291–313, 314–343, and 344–369; these read KAVP…NNDI, SELR…NNKI, SKIH…KNHL, VEIP…DNRI, RKVP…GNPL, ENSG…EAKL, TGIP…HNKI, QAIE…HNQI, RMIE…NNKL, SRVP…TNNI, TKVG…NNPV, and PYWE…NYKK. Residues asparagine 271 and asparagine 312 are each glycosylated (N-linked (GlcNAc...) asparagine). Cysteine 322 and cysteine 355 are joined by a disulfide.

This sequence belongs to the small leucine-rich proteoglycan (SLRP) family. SLRP class I subfamily. As to quaternary structure, homodimer. Forms a ternary complex with MFAP2 and ELN. Post-translationally, the two attached glycosaminoglycan chains can be either chondroitin sulfate or dermatan sulfate.

The protein localises to the secreted. It is found in the extracellular space. Its subcellular location is the extracellular matrix. In terms of biological role, may be involved in collagen fiber assembly. This is Biglycan (BGN) from Canis lupus familiaris (Dog).